The sequence spans 166 residues: MSDDEGQFAEGGAQVGSLTYPMQAGALKKGGYICINGRPCKVIDLSVSKTGKHGHAKVSIVALDIFTGNKMEDQAPSTHNVEVPFVKTATYSVLDIQEDREDPSKPAHLSLMDDEGETRDNLDMPPNAELAGQIKEQFDAGKDVLVVVVSAMGIDQILSFKNAAER.

Lysine 52 carries the hypusine modification. The segment at 99-125 (DREDPSKPAHLSLMDDEGETRDNLDMP) is disordered.

It belongs to the eIF-5A family. Post-translationally, lys-52 undergoes hypusination, a unique post-translational modification that consists in the addition of a butylamino group from spermidine to lysine side chain, leading to the formation of the unusual amino acid hypusine. eIF-5As are the only known proteins to undergo this modification, which is essential for their function. Hypusination is mediated by the consecutive action of deoxyhypusine synthase DHSc and deoxyhypusine hydroxylase DOHH.

The protein localises to the cytoplasm. Its function is as follows. Translation factor that promotes translation elongation and termination, particularly upon ribosome stalling at specific amino acid sequence contexts. Binds between the exit (E) and peptidyl (P) site of the ribosome and promotes rescue of stalled ribosome: specifically required for efficient translation of polyproline-containing peptides as well as other motifs that stall the ribosome. Acts as a ribosome quality control (RQC) cofactor by joining the RQC complex to facilitate peptidyl transfer during CAT tailing step. Required for cell growth during both bloodstream (BF) and insect procyclic (PF) life cycle stages and for survival of the bloodstream form. The chain is Eukaryotic translation initiation factor 5A from Trypanosoma brucei brucei (strain 927/4 GUTat10.1).